Reading from the N-terminus, the 180-residue chain is DNA replication regulator protein HobA (180 aa).

Ca(2+)-binding residues include E17, E27, E140, E143, and N176.

Forms dimers and homotetramers. Interacts with domains I and II (residues 1-112) of DnaA. In a crystal with domains I and II of DnaA HobA forms tetramers with DnaA fragments bound at the dimer interface of the tetramer. Ca(2+) serves as cofactor.

Functionally, required for DNA replication initiation. Increases binding of DnaA to oriC region. This Helicobacter pylori (strain ATCC 700392 / 26695) (Campylobacter pylori) protein is DNA replication regulator protein HobA.